Reading from the N-terminus, the 1492-residue chain is Neogenin (1492 aa).

Positions 1-36 are cleaved as a signal peptide; that stretch reads MAAEREAGRLLCTSSSRRCCPPPPLLLLLPLLLLLG. Residues 37-1136 lie on the Extracellular side of the membrane; that stretch reads RPASGAAATK…PTSPLDSNML (1100 aa). Ig-like C2-type domains are found at residues 63–158, 163–249, 254–347, and 352–437; these read PFYF…AKLT, PRFT…AELK, PEEI…AELT, and PGFL…AQLI. Asparagine 84 is a glycosylation site (N-linked (GlcNAc...) asparagine). 3 cysteine pairs are disulfide-bonded: cysteine 85/cysteine 140, cysteine 184/cysteine 232, and cysteine 281/cysteine 331. Residue asparagine 221 is glycosylated (N-linked (GlcNAc...) asparagine). Asparagine 337 is a glycosylation site (N-linked (GlcNAc...) asparagine). Cysteine 373 and cysteine 421 are oxidised to a cystine. Fibronectin type-III domains are found at residues 472–566, 572–662, 667–762, 772–862, 887–986, and 988–1085; these read APRD…TQPE, PAPN…TLSD, APQN…TFES, VPSS…RPHT, PPVG…LVPT, and PPKD…TPKA. N-linked (GlcNAc...) asparagine glycans are attached at residues asparagine 501 and asparagine 520. N-linked (GlcNAc...) asparagine glycans are attached at residues asparagine 670 and asparagine 746. Asparagine 940 carries an N-linked (GlcNAc...) asparagine glycan. The segment at 1072-1128 is disordered; sequence GPMSEAVQFRTPKADSSDKMPNDQALGSAGKGSRLPDLGSDYKPPMSGSNSPHGSPT. Over residues 1083–1092 the composition is skewed to basic and acidic residues; that stretch reads PKADSSDKMP. A compositionally biased stretch (polar residues) spans 1118–1128; that stretch reads SGSNSPHGSPT. A helical transmembrane segment spans residues 1137 to 1157; the sequence is LVIIVSVGVITIVVVVVIAVF. At 1158 to 1492 the chain is on the cytoplasmic side; that stretch reads CTRRTTSHQK…MKDLNAITTA (335 aa). Disordered regions lie at residues 1205-1237, 1266-1300, and 1321-1396; these read PIDKSPDPNPVMTDTPIPRNSQDITPVDNSMDS, PKMMMPFDSQPPQPVISAHPIHSLDNPHHHFHSSS, and SMSL…FAVP. Phosphoserine occurs at positions 1209 and 1225. Residues 1222-1237 show a composition bias toward polar residues; it reads PRNSQDITPVDNSMDS. Threonine 1229 carries the phosphothreonine modification. Composition is skewed to polar residues over residues 1321–1353 and 1361–1380; these read SMSLSDRANSTESVRNTPSTDTMPASSSQTCCT and ATSSSYLASSQEEDSGQSLP. Serine 1432 carries the phosphoserine modification. Threonine 1435 is subject to Phosphothreonine. Residues serine 1463, serine 1465, and serine 1466 each carry the phosphoserine modification.

Belongs to the immunoglobulin superfamily. DCC family. In terms of assembly, interacts with BMP2, BMP4, BMP6, and BMP7. Interacts with RGMA and RGMB. Interacts with MYO10. Widely expressed.

The protein localises to the cell membrane. In terms of biological role, multi-functional cell surface receptor regulating cell adhesion in many diverse developmental processes, including neural tube and mammary gland formation, myogenesis and angiogenesis. Receptor for members of the BMP, netrin, and repulsive guidance molecule (RGM) families. Netrin-Neogenin interactions result in a chemoattractive axon guidance response and cell-cell adhesion, the interaction between NEO1/Neogenin and RGMa and RGMb induces a chemorepulsive response. In Mus musculus (Mouse), this protein is Neogenin.